Reading from the N-terminus, the 284-residue chain is 2-dehydro-3-deoxyphosphooctonate aldolase (284 aa).

It belongs to the KdsA family.

It localises to the cytoplasm. It catalyses the reaction D-arabinose 5-phosphate + phosphoenolpyruvate + H2O = 3-deoxy-alpha-D-manno-2-octulosonate-8-phosphate + phosphate. The protein operates within carbohydrate biosynthesis; 3-deoxy-D-manno-octulosonate biosynthesis; 3-deoxy-D-manno-octulosonate from D-ribulose 5-phosphate: step 2/3. Its pathway is bacterial outer membrane biogenesis; lipopolysaccharide biosynthesis. This chain is 2-dehydro-3-deoxyphosphooctonate aldolase, found in Histophilus somni (strain 129Pt) (Haemophilus somnus).